Reading from the N-terminus, the 190-residue chain is Peptidyl-tRNA hydrolase (190 aa).

Tyr18 lines the tRNA pocket. His23 acts as the Proton acceptor in catalysis. Residues Phe67, Asn69, and Asn115 each coordinate tRNA.

This sequence belongs to the PTH family. As to quaternary structure, monomer.

The protein resides in the cytoplasm. It catalyses the reaction an N-acyl-L-alpha-aminoacyl-tRNA + H2O = an N-acyl-L-amino acid + a tRNA + H(+). Functionally, hydrolyzes ribosome-free peptidyl-tRNAs (with 1 or more amino acids incorporated), which drop off the ribosome during protein synthesis, or as a result of ribosome stalling. In terms of biological role, catalyzes the release of premature peptidyl moieties from peptidyl-tRNA molecules trapped in stalled 50S ribosomal subunits, and thus maintains levels of free tRNAs and 50S ribosomes. This is Peptidyl-tRNA hydrolase from Leptospira interrogans serogroup Icterohaemorrhagiae serovar Lai (strain 56601).